The primary structure comprises 245 residues: 8-amino-3,8-dideoxy-manno-octulosonate cytidylyltransferase (245 aa).

It belongs to the KdsB family.

The protein localises to the cytoplasm. The enzyme catalyses 8-amino-3,8-dideoxy-alpha-D-manno-octulosonate + CTP = CMP-8-amino-3,8-dideoxy-alpha-D-manno-oct-2-ulosonate + diphosphate. It participates in bacterial outer membrane biogenesis; lipopolysaccharide biosynthesis. Its function is as follows. Activates KDO8N (a required 8-carbon sugar) for incorporation into bacterial lipopolysaccharide in the Shewanella genus. The sequence is that of 8-amino-3,8-dideoxy-manno-octulosonate cytidylyltransferase from Shewanella baltica (strain OS185).